Reading from the N-terminus, the 54-residue chain is uncharacterized protein (54 aa).

Residues 1 to 13 (MLLCFHMCQRIMW) form the signal peptide.

Its subcellular location is the secreted. This is an uncharacterized protein from Saccharomyces cerevisiae (strain ATCC 204508 / S288c) (Baker's yeast).